The chain runs to 520 residues: Succinyl-CoA:3-ketoacid coenzyme A transferase 2B, mitochondrial (520 aa).

A mitochondrion-targeting transit peptide spans Met1–Ser39. The segment at Glu280–Ser299 is disordered. Catalysis depends on Glu342, which acts as the 5-glutamyl coenzyme A thioester intermediate.

Belongs to the 3-oxoacid CoA-transferase family. In terms of assembly, homodimer. In terms of tissue distribution, testis specific. Expressed in late spermatids. Accumulates during spermiogenesis. Also detected in the midpiece of spermatozoa.

The protein localises to the mitochondrion. It catalyses the reaction a 3-oxo acid + succinyl-CoA = a 3-oxoacyl-CoA + succinate. It participates in ketone metabolism; succinyl-CoA degradation; acetoacetyl-CoA from succinyl-CoA: step 1/1. In terms of biological role, key enzyme for ketone body catabolism. Transfers the CoA moiety from succinate to acetoacetate. Formation of the enzyme-CoA intermediate proceeds via an unstable anhydride species formed between the carboxylate groups of the enzyme and substrate. Probably play and important roles in the energy metabolism of spermatozoa. In Mus musculus (Mouse), this protein is Succinyl-CoA:3-ketoacid coenzyme A transferase 2B, mitochondrial (Oxct2b).